The following is a 145-amino-acid chain: Superoxide dismutase [Mn/Fe] (145 aa).

Fe(3+) is bound by residues His-10 and His-64. Mn(2+) is bound by residues His-10 and His-64. The interval 126 to 145 is disordered; that stretch reads TSTANQDTPISEGKKPILGL.

This sequence belongs to the iron/manganese superoxide dismutase family. Mn(2+) is required as a cofactor. Fe(3+) serves as cofactor.

The catalysed reaction is 2 superoxide + 2 H(+) = H2O2 + O2. Destroys superoxide anion radicals which are normally produced within the cells and which are toxic to biological systems. Catalyzes the dismutation of superoxide anion radicals into O2 and H2O2 by successive reduction and oxidation of the transition metal ion at the active site. In Streptococcus mitis, this protein is Superoxide dismutase [Mn/Fe] (sodA).